The sequence spans 287 residues: Bifunctional protein FolD (287 aa).

NADP(+) is bound by residues 166–168 and Ile232; that span reads GAS.

The protein belongs to the tetrahydrofolate dehydrogenase/cyclohydrolase family. In terms of assembly, homodimer.

It carries out the reaction (6R)-5,10-methylene-5,6,7,8-tetrahydrofolate + NADP(+) = (6R)-5,10-methenyltetrahydrofolate + NADPH. It catalyses the reaction (6R)-5,10-methenyltetrahydrofolate + H2O = (6R)-10-formyltetrahydrofolate + H(+). It participates in one-carbon metabolism; tetrahydrofolate interconversion. Functionally, catalyzes the oxidation of 5,10-methylenetetrahydrofolate to 5,10-methenyltetrahydrofolate and then the hydrolysis of 5,10-methenyltetrahydrofolate to 10-formyltetrahydrofolate. The sequence is that of Bifunctional protein FolD from Aeromonas salmonicida (strain A449).